Reading from the N-terminus, the 417-residue chain is Phosphoglycerate kinase (417 aa).

Residues valine 23, aspartate 24, phenylalanine 25, asparagine 26, glutamine 39, arginine 40, serine 63, histidine 64, glycine 66, arginine 67, leucine 122, arginine 123, histidine 170, and arginine 171 each coordinate (2R)-3-phosphoglycerate. Serine 203 is subject to Phosphoserine. ADP is bound at residue glycine 214. Residue glycine 214 coordinates CDP. Positions 215 and 216 each coordinate AMP. Alanine 215 is an ATP binding site. Alanine 215 serves as a coordination point for Mg(2+). Aspartate 219 lines the CDP pocket. Aspartate 219 provides a ligand contact to Mg(2+). An AMP-binding site is contributed by lysine 220. Lysine 220 provides a ligand contact to ATP. Glycine 238 is a binding site for ADP. Glycine 238 serves as a coordination point for CDP. Residues alanine 239 and glycine 313 each coordinate AMP. Positions 239 and 313 each coordinate ATP. 2 residues coordinate CDP: glycine 338 and phenylalanine 343. Phenylalanine 343 contributes to the ADP binding site. Glutamate 344 provides a ligand contact to AMP. ATP contacts are provided by glutamate 344, aspartate 375, and threonine 376. Aspartate 375 lines the Mg(2+) pocket.

This sequence belongs to the phosphoglycerate kinase family. In terms of assembly, monomer. Requires Mg(2+) as cofactor. Dephosphorylated by PTC1 and PTC2 at Ser-203; the protein is cytosolic when dephosphorylated.

It is found in the cytoplasm. Its subcellular location is the cytosol. The protein localises to the mitochondrion. The enzyme catalyses (2R)-3-phosphoglycerate + ATP = (2R)-3-phospho-glyceroyl phosphate + ADP. It participates in carbohydrate degradation; glycolysis; pyruvate from D-glyceraldehyde 3-phosphate: step 2/5. Catalyzes one of the two ATP producing reactions in the glycolytic pathway via the reversible conversion of 1,3-diphosphoglycerate to 3-phosphoglycerate. Both L- and D- forms of purine and pyrimidine nucleotides can be used as substrates, but the activity is much lower on pyrimidines. Negatively regulates the biosynthesis of acetyl-CoA from pyruvate in the mitochondrion and consequently also attenuates aflatoxin production. This chain is Phosphoglycerate kinase, found in Aspergillus flavus (strain ATCC 200026 / FGSC A1120 / IAM 13836 / NRRL 3357 / JCM 12722 / SRRC 167).